Reading from the N-terminus, the 611-residue chain is Replication protein E1 (611 aa).

Residues 74–76 (KRK) carry the Nuclear localization signal motif. Phosphoserine; by host occurs at positions 80, 84, and 90. The Nuclear export signal signature appears at 89–98 (LSPGLAGIRI). The segment covering 112 to 128 (FDAGGRDAVRTPRDHEV) has biased composition (basic and acidic residues). A disordered region spans residues 112–154 (FDAGGRDAVRTPRDHEVNSSPEPRSQVQSGSSSRSWEGHLESI). The span at 135–146 (RSQVQSGSSSRS) shows a compositional bias: low complexity. Residues 146-313 (SWEGHLESIN…TNVAYNTGEA (168 aa)) form a DNA-binding region region. The 151-residue stretch at 412–562 (IEPINFVNAL…CPASDTGEPL (151 aa)) folds into the SF3 helicase domain. 438 to 445 (GPPNSGKS) contacts ATP. A Glycyl lysine isopeptide (Lys-Gly) (interchain with G-Cter in SUMO) cross-link involves residue Lys-519.

This sequence belongs to the papillomaviridae E1 protein family. In terms of assembly, can form hexamers. Interacts with E2 protein; this interaction increases E1 DNA binding specificity. Interacts with host DNA polymerase subunit POLA2. Interacts with host single stranded DNA-binding protein RPA1. Interacts with host TOP1; this interaction stimulates the enzymatic activity of TOP1. In terms of processing, phosphorylated. Sumoylated.

It is found in the host nucleus. The catalysed reaction is Couples ATP hydrolysis with the unwinding of duplex DNA by translocating in the 3'-5' direction.. The enzyme catalyses ATP + H2O = ADP + phosphate + H(+). In terms of biological role, ATP-dependent DNA 3'-5' helicase required for initiation of viral DNA replication. It forms a complex with the viral E2 protein. The E1-E2 complex binds to the replication origin which contains binding sites for both proteins. During the initial step, a dimer of E1 interacts with a dimer of protein E2 leading to a complex that binds the viral origin of replication with high specificity. Then, a second dimer of E1 displaces the E2 dimer in an ATP-dependent manner to form the E1 tetramer. Following this, two E1 monomers are added to each half of the site, which results in the formation of two E1 trimers on the viral ori. Subsequently, two hexamers will be created. The double hexamer acts as a bi-directional helicase machinery and unwinds the viral DNA and then recruits the host DNA polymerase to start replication. The chain is Replication protein E1 from Cervus elaphus (Red deer).